Reading from the N-terminus, the 57-residue chain is uncharacterized protein (57 aa).

This is an uncharacterized protein from Archaeoglobus fulgidus (strain ATCC 49558 / DSM 4304 / JCM 9628 / NBRC 100126 / VC-16).